A 398-amino-acid chain; its full sequence is Formate-dependent phosphoribosylglycinamide formyltransferase (398 aa).

Residues 21–22 and glutamate 81 contribute to the N(1)-(5-phospho-beta-D-ribosyl)glycinamide site; that span reads EL. ATP-binding positions include arginine 113, lysine 154, 194-197, and glutamate 202; that span reads EEYV. The 197-residue stretch at 118 to 314 folds into the ATP-grasp domain; sequence RFAAEKVKVP…EFQVHVRSAL (197 aa). The Mg(2+) site is built by glutamate 273 and glutamate 285. N(1)-(5-phospho-beta-D-ribosyl)glycinamide is bound by residues aspartate 292, lysine 362, and 369 to 370; that span reads RR.

It belongs to the PurK/PurT family. In terms of assembly, homodimer.

The catalysed reaction is N(1)-(5-phospho-beta-D-ribosyl)glycinamide + formate + ATP = N(2)-formyl-N(1)-(5-phospho-beta-D-ribosyl)glycinamide + ADP + phosphate + H(+). It functions in the pathway purine metabolism; IMP biosynthesis via de novo pathway; N(2)-formyl-N(1)-(5-phospho-D-ribosyl)glycinamide from N(1)-(5-phospho-D-ribosyl)glycinamide (formate route): step 1/1. Its function is as follows. Involved in the de novo purine biosynthesis. Catalyzes the transfer of formate to 5-phospho-ribosyl-glycinamide (GAR), producing 5-phospho-ribosyl-N-formylglycinamide (FGAR). Formate is provided by PurU via hydrolysis of 10-formyl-tetrahydrofolate. In Sulfolobus acidocaldarius (strain ATCC 33909 / DSM 639 / JCM 8929 / NBRC 15157 / NCIMB 11770), this protein is Formate-dependent phosphoribosylglycinamide formyltransferase.